The sequence spans 148 residues: Tetratricopeptide repeat protein 32 (148 aa).

TPR repeat units lie at residues 12–45, 55–88, and 89–122; these read SSAA…CARH, ATAY…LPSF, and EVPY…NPGF.

This is Tetratricopeptide repeat protein 32 (Ttc32) from Mus musculus (Mouse).